The following is a 233-amino-acid chain: Small ribosomal subunit protein uS3 (233 aa).

Positions 39-107 constitute a KH type-2 domain; that stretch reads VREFLKKRLG…PVHVNIEEVR (69 aa). A disordered region spans residues 212–233; that stretch reads VQATPAAPEKKMRKGARNAAAN.

Belongs to the universal ribosomal protein uS3 family. As to quaternary structure, part of the 30S ribosomal subunit. Forms a tight complex with proteins S10 and S14.

Binds the lower part of the 30S subunit head. Binds mRNA in the 70S ribosome, positioning it for translation. This chain is Small ribosomal subunit protein uS3, found in Chromobacterium violaceum (strain ATCC 12472 / DSM 30191 / JCM 1249 / CCUG 213 / NBRC 12614 / NCIMB 9131 / NCTC 9757 / MK).